We begin with the raw amino-acid sequence, 258 residues long: Acyl-[acyl-carrier-protein]--UDP-N-acetylglucosamine O-acyltransferase (258 aa).

The protein belongs to the transferase hexapeptide repeat family. LpxA subfamily. As to quaternary structure, homotrimer.

The protein localises to the cytoplasm. The catalysed reaction is a (3R)-hydroxyacyl-[ACP] + UDP-N-acetyl-alpha-D-glucosamine = a UDP-3-O-[(3R)-3-hydroxyacyl]-N-acetyl-alpha-D-glucosamine + holo-[ACP]. Its pathway is glycolipid biosynthesis; lipid IV(A) biosynthesis; lipid IV(A) from (3R)-3-hydroxytetradecanoyl-[acyl-carrier-protein] and UDP-N-acetyl-alpha-D-glucosamine: step 1/6. Functionally, involved in the biosynthesis of lipid A, a phosphorylated glycolipid that anchors the lipopolysaccharide to the outer membrane of the cell. The protein is Acyl-[acyl-carrier-protein]--UDP-N-acetylglucosamine O-acyltransferase of Stutzerimonas stutzeri (strain A1501) (Pseudomonas stutzeri).